The sequence spans 411 residues: Methyl-CpG-binding domain protein 2 (411 aa).

The required for interaction with DHX9 and PRMT5 stretch occupies residues 1–149 (MRAHPGGGRC…GPRATESGKR (149 aa)). Positions 1-158 (MRAHPGGGRC…RMDCPALPPG (158 aa)) are disordered. A compositionally biased stretch (basic residues) spans 77–95 (GRGRGRGRGRGRGRGRGRG). The span at 98–121 (PSGGSGLGGDGGGCGGGGSGGGGA) shows a compositional bias: gly residues. In terms of domain architecture, MBD spans 145–213 (ESGKRMDCPA…SSFDFRTGKM (69 aa)). Ser181 is modified (phosphoserine). The segment at 214–241 (MPSKLQKNKQRLRNDPLNQNKGKPDLNT) is disordered. The segment covering 229-241 (PLNQNKGKPDLNT) has biased composition (polar residues). Ser407 is modified (phosphoserine).

In terms of assembly, heterodimer with MBD3 (via N-terminus). Component of the MeCP1 complex that contains HDAC1 and HDAC2. Component of the nucleosome remodeling and deacetylase (NuRD) repressor complex, composed of core proteins MTA1, MTA2, MTA3, RBBP4, RBBP7, HDAC1, HDAC2, MBD2, MBD3, and peripherally associated proteins CDK2AP1, CDK2AP2, GATAD2A, GATAD2B, CHD3, CHD4 and CHD5. The exact stoichiometry of the NuRD complex is unknown, and some subunits such as MBD2 and MBD3, GATAD2A and GATAD2B, and CHD3, CHD4 and CHD5 define mutually exclusive NuRD complexes. Interacts with CDK2AP1. Interacts with DHX9. Interacts with DNMT1. Interacts with GATAD2A/p66-alpha. Interacts with GATAD2B/p66-beta. Interacts with GPN1. Interacts with MIZF. Interacts with PRMT5. Interacts with SIN3A. Interacts with SPHK2. In terms of tissue distribution, highly expressed in brain, heart, kidney, stomach, testis and placenta.

Its subcellular location is the nucleus. The protein localises to the chromosome. Its function is as follows. Binds CpG islands in promoters where the DNA is methylated at position 5 of cytosine within CpG dinucleotides. Binds hemimethylated DNA as well. Recruits histone deacetylases and DNA methyltransferases to chromatin. Acts as a component of the histone deacetylase NuRD complex which participates in the remodeling of chromatin. Acts as a transcriptional repressor and plays a role in gene silencing. Functions as a scaffold protein, targeting GATAD2A and GATAD2B to chromatin to promote repression. May enhance the activation of some unmethylated cAMP-responsive promoters. This is Methyl-CpG-binding domain protein 2 from Homo sapiens (Human).